Consider the following 92-residue polypeptide: MVRSVWKGPFVEGSLLKKADVARASGRHDVIKIWSRRSTILPQFVGLTFGVYNGQKHVPVAINEEMVGHKFGEFSPTRTFHGHSGDKKSKKG.

The protein belongs to the universal ribosomal protein uS19 family.

In terms of biological role, protein S19 forms a complex with S13 that binds strongly to the 16S ribosomal RNA. The polypeptide is Small ribosomal subunit protein uS19 (Rhodopseudomonas palustris (strain BisB5)).